Here is a 524-residue protein sequence, read N- to C-terminus: Phytoene desaturase (neurosporene-forming) (524 aa).

12–45 (VVIGAGLGGLAAAMRLGAKGYKVTVVDRLDRPGG) provides a ligand contact to FAD. The interval 500-524 (PDAPKPETPAAAAPKARTPRAKAAQ) is disordered. Over residues 507–524 (TPAAAAPKARTPRAKAAQ) the composition is skewed to low complexity.

The protein belongs to the carotenoid/retinoid oxidoreductase family. Requires FAD as cofactor.

It carries out the reaction 15-cis-phytoene + 3 A = all-trans-neurosporene + 3 AH2. Its pathway is carotenoid biosynthesis. With respect to regulation, is inhibited by diphenylamine (DPA). Is also slightly inhibited by NAD, NADP or ATP in the presence of FAD. Converts phytoene into all-trans-neurosporene as the major product, via the intermediary of phytofluene and zeta-carotene, by the introduction of three double bonds. Both intermediates, phytofluene and zeta-carotene, can be used as substrates and converted to neurosporene. 1,2-epoxy phytoene is also a suitable substrate whereas the C30 diapophytoene is not. This chain is Phytoene desaturase (neurosporene-forming) (crtI), found in Rhodobacter capsulatus (strain ATCC BAA-309 / NBRC 16581 / SB1003).